Consider the following 525-residue polypeptide: uncharacterized protein (525 aa).

The N-terminal stretch at 1 to 21 (MLECLSALLVLFAGGGGSVLA) is a signal peptide. Topologically, residues 22–448 (AVQSKTVADP…ISAASQLDKR (427 aa)) are extracellular. Positions 242–264 (KVSSENCSKDTDDKSGSKKERNT) are disordered. A helical membrane pass occupies residues 449–469 (IFIFTAITVSITTLMMLGFSY). The Cytoplasmic portion of the chain corresponds to 470–525 (RSRVSFRDHSIDDSDDDNDWSDDEVEFDEEYFYSLPVSIPEKGISLDKMAQQLGVE).

The protein localises to the membrane. This is an uncharacterized protein from Saccharomyces cerevisiae (strain ATCC 204508 / S288c) (Baker's yeast).